A 148-amino-acid polypeptide reads, in one-letter code: F-box protein At3g55900 (148 aa).

The region spanning 9–59 (CRNLSELPQELLYKILGLLPTRNVVSTSLISHQRRSQFHWMERLKFRYPRL) is the F-box domain.

The polypeptide is F-box protein At3g55900 (Arabidopsis thaliana (Mouse-ear cress)).